The primary structure comprises 531 residues: Unconventional prefoldin RPB5 interactor (531 aa).

Methionine 1 is subject to N-acetylmethionine. Disordered stretches follow at residues methionine 1–arginine 24, glutamate 224–alanine 381, lysine 408–serine 470, and threonine 500–serine 531. A compositionally biased stretch (low complexity) spans proline 13–arginine 24. Composition is skewed to polar residues over residues serine 257 to serine 266 and glycine 280 to histidine 296. The segment covering aspartate 300–glutamate 319 has biased composition (acidic residues). Serine 369 is modified (phosphoserine; by RPS6KB1). The span at asparagine 414 to serine 424 shows a compositional bias: polar residues. Serine 439 bears the Phosphoserine mark.

Belongs to the RNA polymerase II subunit 5-mediating protein family. As to quaternary structure, homodimer. Component of the PAQosome complex which is responsible for the biogenesis of several protein complexes and which consists of R2TP complex members RUVBL1, RUVBL2, RPAP3 and PIH1D1, URI complex members PFDN2, PFDN6, PDRG1, UXT and URI1 as well as ASDURF, POLR2E and DNAAF10/WDR92. Interacts with POLR2E/RPB5, RUVBL2 and RUVBL1. Interacts with PFDN2, PFDN4 and STAP1; the interactions are phosphorylation-dependent and occur in a growth-dependent manner in the mitochondrion. Interacts with UXT. Interacts with PPP1CC; the interaction is phosphorylation-dependent and occurs in a growth factor-dependent manner. Interacts (via the middle C-terminal region) with GTF2F1 and GTF2F2. Interacts with DMAP1. Interacts with TSC1 and TSC2. Interacts with PRPF8 and EFTUD2 in a ZNHIT2-dependent manner. In terms of processing, phosphorylation occurs in response to androgen treatment in prostate cancer cells in a mTOR-dependent manner. Phosphorylated; hyperhosphorylated in mitochondria in a mTORC-dependent signaling pathway. Phosphorylated at Ser-369 by RPS6KB1 in a growth factor- and rapamycin-dependent manner. S6K1-mediated mitochondrial phosphorylation at Ser-369 disrupts the URI1-PPP1CC complex in the mitochondrion, relieves PPP1CC phosphatase inhibition activity and hence engages a negative feedback diminishing RPS6KB1 kinase activity, preventing sustained S6K1-dependent signaling. Phosphorylated. Phosphorylation occurs essentially on serine residues. Expressed in the spinal cord, ganglia, choroid plexus and olfactors epithelium of the developing brain. Expressed in skin, lung, kidney, testis and muscles (at protein level). Expressed strongly in brain and kidney. Expressed weakly in skeletal muscle, lung and liver.

It is found in the nucleus. Its subcellular location is the cytoplasm. The protein resides in the mitochondrion. It localises to the cell projection. The protein localises to the dendrite. In terms of biological role, involved in gene transcription regulation. Acts as a transcriptional repressor in concert with the corepressor UXT to regulate androgen receptor (AR) transcription. May act as a tumor suppressor to repress AR-mediated gene transcription and to inhibit anchorage-independent growth in prostate cancer cells. Required for cell survival in ovarian cancer cells. Together with UXT, associates with chromatin to the NKX3-1 promoter region. Plays a central role in maintaining S6K1 signaling and BAD phosphorylation under normal growth conditions thereby protecting cells from potential deleterious effects of sustained S6K1 signaling. The URI1-PPP1CC complex acts as a central component of a negative feedback mechanism that counteracts excessive S6K1 survival signaling to BAD in response to growth factors. Mediates inhibition of PPP1CC phosphatase activity in mitochondria. Coordinates the regulation of nutrient-sensitive gene expression availability in a mTOR-dependent manner. Seems to be a scaffolding protein able to assemble a prefoldin-like complex that contains PFDs and proteins with roles in transcription and ubiquitination. This Mus musculus (Mouse) protein is Unconventional prefoldin RPB5 interactor (Uri1).